Consider the following 231-residue polypeptide: 5'-methylthioadenosine/S-adenosylhomocysteine nucleosidase (231 aa).

E12 functions as the Proton acceptor in the catalytic mechanism. Residues G78, M153, and 174 to 175 each bind substrate; that span reads ME. Residue D198 is the Proton donor of the active site.

The protein belongs to the PNP/UDP phosphorylase family. MtnN subfamily.

It carries out the reaction S-adenosyl-L-homocysteine + H2O = S-(5-deoxy-D-ribos-5-yl)-L-homocysteine + adenine. The catalysed reaction is S-methyl-5'-thioadenosine + H2O = 5-(methylsulfanyl)-D-ribose + adenine. The enzyme catalyses 5'-deoxyadenosine + H2O = 5-deoxy-D-ribose + adenine. It functions in the pathway amino-acid biosynthesis; L-methionine biosynthesis via salvage pathway; S-methyl-5-thio-alpha-D-ribose 1-phosphate from S-methyl-5'-thioadenosine (hydrolase route): step 1/2. Its function is as follows. Catalyzes the irreversible cleavage of the glycosidic bond in both 5'-methylthioadenosine (MTA) and S-adenosylhomocysteine (SAH/AdoHcy) to adenine and the corresponding thioribose, 5'-methylthioribose and S-ribosylhomocysteine, respectively. Also cleaves 5'-deoxyadenosine, a toxic by-product of radical S-adenosylmethionine (SAM) enzymes, into 5-deoxyribose and adenine. The polypeptide is 5'-methylthioadenosine/S-adenosylhomocysteine nucleosidase (Bacillus velezensis (strain DSM 23117 / BGSC 10A6 / LMG 26770 / FZB42) (Bacillus amyloliquefaciens subsp. plantarum)).